The chain runs to 309 residues: uncharacterized protein (309 aa).

A helical transmembrane segment spans residues 23–39 (RFNVAIIGGTGGLGRAI).

This sequence belongs to the NmrA-type oxidoreductase family.

The protein resides in the membrane. This is an uncharacterized protein from Saccharomyces cerevisiae (strain ATCC 204508 / S288c) (Baker's yeast).